We begin with the raw amino-acid sequence, 187 residues long: MRGKTAEDLKLLDLLDPVAEAVGYEIVRLRLMGGERNQRRLQIMAERPLLEDGTGGDMNVEDCAKLSRAVSEVLDAADPISGEYTLEVSSPGVDRPLTRLKDFDTYEGYEARLELDRLAEGRKRFRGVLAGVEGDQVAIDLEGEEETALVPFAWIVEAKLVLTDELMKRGAQTRAARLESDEQQTSE.

The protein belongs to the RimP family.

Its subcellular location is the cytoplasm. Functionally, required for maturation of 30S ribosomal subunits. In Phenylobacterium zucineum (strain HLK1), this protein is Ribosome maturation factor RimP.